Consider the following 82-residue polypeptide: Small ribosomal subunit protein bS18 (82 aa).

The tract at residues 1 to 20 is disordered; the sequence is MVDINQIPTRRPFHRRRKTC.

The protein belongs to the bacterial ribosomal protein bS18 family. As to quaternary structure, part of the 30S ribosomal subunit. Forms a tight heterodimer with protein bS6.

In terms of biological role, binds as a heterodimer with protein bS6 to the central domain of the 16S rRNA, where it helps stabilize the platform of the 30S subunit. The protein is Small ribosomal subunit protein bS18 of Mesorhizobium japonicum (strain LMG 29417 / CECT 9101 / MAFF 303099) (Mesorhizobium loti (strain MAFF 303099)).